We begin with the raw amino-acid sequence, 1275 residues long: Membrane-associated guanylate kinase, WW and PDZ domain-containing protein 2 (1275 aa).

Residues 17–101 enclose the PDZ 1 domain; the sequence is ESVIGRNPEG…PLRLKCVKQG (85 aa). The 175-residue stretch at 109–283 folds into the Guanylate kinase-like domain; the sequence is RHYLNLRFQK…PVYSQPEELK (175 aa). The tract at residues 203–305 is disordered; it reads LPGATPSAEG…ENEDSDPLPD (103 aa). The segment covering 280 to 295 has biased composition (basic and acidic residues); the sequence is EELKDQMDDTKPTKPE. WW domains follow at residues 301 to 334 and 347 to 380; these read DPLPDNWEMAYTEKGEVYFIDHNTKTTSWLDPRL and NELPYGWEKIDDPIYGTYYVDHINRRTQFENPVL. Residues 301-380 are interaction with DDN; sequence DPLPDNWEMA…RRTQFENPVL (80 aa). Y361 is subject to Phosphotyrosine. 2 consecutive PDZ domains span residues 425 to 509 and 604 to 682; these read STTL…CRGY and TLTI…HRGG. A Phosphoserine modification is found at S685. Positions 698–740 are disordered; it reads ENQGSPQTSLSAPAVPQNLPFPPALHRSSFPDSTEAFDPRKPD. Over residues 699–708 the composition is skewed to polar residues; sequence NQGSPQTSLS. Residues 777–859 enclose the PDZ 4 domain; sequence DVHLRRMESG…NGQVNLTVRR (83 aa). Residue Y826 is modified to Phosphotyrosine. Residues 868–912 are disordered; that stretch reads CPENGRSPGSVSTHHSSPRSDYATYSNSNHAAPSSNASPPEGFAS. A phosphoserine mark is found at S883 and S884. Positions 893–907 are enriched in low complexity; it reads SNSNHAAPSSNASPP. A PDZ 5 domain is found at 919 to 1009; the sequence is DVVIHRKENE…SVTLRIIPQE (91 aa). The span at 1010–1040 shows a compositional bias: polar residues; sequence ELNSPTSAPSSEKQSPMAQQHSPLAQQSPLA. The segment at 1010–1128 is disordered; that stretch reads ELNSPTSAPS…PDTRQYPLSD (119 aa). S1013 carries the post-translational modification Phosphoserine. The span at 1067–1083 shows a compositional bias: basic and acidic residues; sequence NSYRSEVKARQDVKPDI. One can recognise a PDZ 6 domain in the interval 1139–1221; the sequence is TVDMEKGAKG…RVRLLLKRGT (83 aa).

It belongs to the MAGUK family. Interacts (via its WW domains) with DRPLA. Interacts (via its second PDZ domain) with PTEN (via unphosphorylated C-terminus); this interaction diminishes the degradation rate of PTEN. Interacts (via guanylate kinase domain) with DLGAP1. Interacts (via the PDZ domains) with GRIN2A, GRID2 and NLGN1. Interacts with CTNND2, CTNNB1 and MAGUIN-1. Interacts with ACVR2A, SMAD2 and SMAD3. Part of a complex consisting of MAGI2/ARIP1, ACVR2A, ACVR1B and SMAD3. May interact with HTR2A. Interacts with RAPGEF2. Identified in a complex with ACTN4, CASK, IQGAP1, NPHS1, SPTAN1 and SPTBN1. Interacts with DDN. Found in a complex, at least composed of KIDINS220, MAGI2, NTRK1 and RAPGEF2; the complex is mainly formed at late endosomes in a NGF-dependent manner. Interacts with RAPGEF2; the interaction occurs before or after nerve growth factor (NGF) stimulation. Interacts (via PDZ domain) with KIDINS220 (via C-terminal domain). Interacts with IGSF9 and HTR4. Interacts with DLL1. Found in a complex with IGSF9B and NLGN2; the interaction with IGSF9B is mediated via the PDZ 5 and PDZ 6 domains, while the interaction with NLGN2 is mediated via the WW1, WW2 and PDZ2 domains. Interacts (via PDZ 6 domain) with USH1G (via SAM domain); the interaction is triggered by phosphorylation of USH1G by CK2 and negatively regulates MAGI2-mediated endocytosis. Expressed throughout the retina except in the nuclear layers and the photoreceptor outer segments (at protein level). Highest retinal expression is observed in the outer plexiform layer, the outer limiting membrane and the inner segment of photoreceptor cells (at protein level). Expressed in brain.

It is found in the cytoplasm. It localises to the late endosome. Its subcellular location is the synapse. The protein resides in the synaptosome. The protein localises to the cell membrane. It is found in the cytoskeleton. It localises to the microtubule organizing center. Its subcellular location is the centrosome. The protein resides in the cell projection. The protein localises to the cilium. It is found in the centriole. It localises to the photoreceptor inner segment. Its subcellular location is the photoreceptor outer segment. Its function is as follows. Seems to act as a scaffold molecule at synaptic junctions by assembling neurotransmitter receptors and cell adhesion proteins. Plays a role in nerve growth factor (NGF)-induced recruitment of RAPGEF2 to late endosomes and neurite outgrowth. May play a role in regulating activin-mediated signaling in neuronal cells. Enhances the ability of PTEN to suppress AKT1 activation. Plays a role in receptor-mediated clathrin-dependent endocytosis which is required for ciliogenesis. This chain is Membrane-associated guanylate kinase, WW and PDZ domain-containing protein 2 (Magi2), found in Mus musculus (Mouse).